The following is a 100-amino-acid chain: Protein Tat (100 aa).

The tract at residues 1–20 (MEPVNPSLEPWKHPGSQPKT) is disordered. Residues 1–24 (MEPVNPSLEPWKHPGSQPKTACTN) form an interaction with human CREBBP region. The tract at residues 1–48 (MEPVNPSLEPWKHPGSQPKTACTNCYCKKCCFHCQACFITKGLGISYG) is transactivation. Residues C22, C25, and C27 each contribute to the Zn(2+) site. The interval 22 to 37 (CTNCYCKKCCFHCQAC) is cysteine-rich. Residue K28 is modified to N6-acetyllysine; by host PCAF. Positions 30, 33, 34, and 37 each coordinate Zn(2+). Positions 38-48 (FITKGLGISYG) are core. The interval 47–100 (YGRKKRRQRRRPPQDSQTHQVSLSKPSSQPRGDPTGPKEQKKKVERETETDPVH) is disordered. The span at 48 to 57 (GRKKRRQRRR) shows a compositional bias: basic residues. The Nuclear localization signal, RNA-binding (TAR), and protein transduction motif lies at 49-57 (RKKRRQRRR). The interaction with the host capping enzyme RNGTT stretch occupies residues 49–85 (RKKRRQRRRPPQDSQTHQVSLSKPSSQPRGDPTGPKE). Residues K50 and K51 each carry the N6-acetyllysine; by host EP300 and GCN5L2 modification. Asymmetric dimethylarginine; by host PRMT6 is present on residues R52 and R53. Residues 61-76 (DSQTHQVSLSKPSSQP) show a composition bias toward polar residues. K71 participates in a covalent cross-link: Glycyl lysine isopeptide (Lys-Gly) (interchain with G-Cter in ubiquitin). The Cell attachment site motif lies at 77-79 (RGD). Residues 82-100 (GPKEQKKKVERETETDPVH) are compositionally biased toward basic and acidic residues.

The protein belongs to the lentiviruses Tat family. In terms of assembly, interacts with host CCNT1. Associates with the P-TEFb complex composed at least of Tat, P-TEFb (CDK9 and CCNT1), TAR RNA, RNA Pol II. Recruits the HATs CREBBP, TAF1/TFIID, EP300, PCAF and GCN5L2. Interacts with host KAT5/Tip60; this interaction targets the latter to degradation. Interacts with the host deacetylase SIRT1. Interacts with host capping enzyme RNGTT; this interaction stimulates RNGTT. Binds to host KDR, and to the host integrins ITGAV/ITGB3 and ITGA5/ITGB1. Interacts with host KPNB1/importin beta-1 without previous binding to KPNA1/importin alpha-1. Interacts with EIF2AK2. Interacts with host nucleosome assembly protein NAP1L1; this interaction may be required for the transport of Tat within the nucleus, since the two proteins interact at the nuclear rim. Interacts with host C1QBP/SF2P32; this interaction involves lysine-acetylated Tat. Interacts with the host chemokine receptors CCR2, CCR3 and CXCR4. Interacts with host DPP4/CD26; this interaction may trigger an anti-proliferative effect. Interacts with host LDLR. Interacts with the host extracellular matrix metalloproteinase MMP1. Interacts with host PRMT6; this interaction mediates Tat's methylation. Interacts with, and is ubiquitinated by MDM2/Hdm2. Interacts with host PSMC3 and HTATIP2. Interacts with STAB1; this interaction may overcome SATB1-mediated repression of IL2 and IL2RA (interleukin) in T cells by binding to the same domain than HDAC1. Interacts (when acetylated) with human CDK13, thereby increasing HIV-1 mRNA splicing and promoting the production of the doubly spliced HIV-1 protein Nef. Interacts with host TBP; this interaction modulates the activity of transcriptional pre-initiation complex. Interacts with host RELA. Interacts with host PLSCR1; this interaction negatively regulates Tat transactivation activity by altering its subcellular distribution. Asymmetrical arginine methylation by host PRMT6 seems to diminish the transactivation capacity of Tat and affects the interaction with host CCNT1. Post-translationally, acetylation by EP300, CREBBP, GCN5L2/GCN5 and PCAF regulates the transactivation activity of Tat. EP300-mediated acetylation of Lys-50 promotes dissociation of Tat from the TAR RNA through the competitive binding to PCAF's bromodomain. In addition, the non-acetylated Tat's N-terminus can also interact with PCAF. PCAF-mediated acetylation of Lys-28 enhances Tat's binding to CCNT1. Lys-50 is deacetylated by SIRT1. In terms of processing, polyubiquitination by host MDM2 does not target Tat to degradation, but activates its transactivation function and fosters interaction with CCNT1 and TAR RNA. Phosphorylated by EIF2AK2 on serine and threonine residues adjacent to the basic region important for TAR RNA binding and function. Phosphorylation of Tat by EIF2AK2 is dependent on the prior activation of EIF2AK2 by dsRNA.

It localises to the host nucleus. Its subcellular location is the host nucleolus. The protein localises to the host cytoplasm. The protein resides in the secreted. Its function is as follows. Transcriptional activator that increases RNA Pol II processivity, thereby increasing the level of full-length viral transcripts. Recognizes a hairpin structure at the 5'-LTR of the nascent viral mRNAs referred to as the transactivation responsive RNA element (TAR) and recruits the cyclin T1-CDK9 complex (P-TEFb complex) that will in turn hyperphosphorylate the RNA polymerase II to allow efficient elongation. The CDK9 component of P-TEFb and other Tat-activated kinases hyperphosphorylate the C-terminus of RNA Pol II that becomes stabilized and much more processive. Other factors such as HTATSF1/Tat-SF1, SUPT5H/SPT5, and HTATIP2 are also important for Tat's function. Besides its effect on RNA Pol II processivity, Tat induces chromatin remodeling of proviral genes by recruiting the histone acetyltransferases (HATs) CREBBP, EP300 and PCAF to the chromatin. This also contributes to the increase in proviral transcription rate, especially when the provirus integrates in transcriptionally silent region of the host genome. To ensure maximal activation of the LTR, Tat mediates nuclear translocation of NF-kappa-B by interacting with host RELA. Through its interaction with host TBP, Tat may also modulate transcription initiation. Tat can reactivate a latently infected cell by penetrating in it and transactivating its LTR promoter. In the cytoplasm, Tat is thought to act as a translational activator of HIV-1 mRNAs. Functionally, extracellular circulating Tat can be endocytosed by surrounding uninfected cells via the binding to several surface receptors such as CD26, CXCR4, heparan sulfate proteoglycans (HSPG) or LDLR. Neurons are rarely infected, but they internalize Tat via their LDLR. Through its interaction with nuclear HATs, Tat is potentially able to control the acetylation-dependent cellular gene expression. Modulates the expression of many cellular genes involved in cell survival, proliferation or in coding for cytokines or cytokine receptors. Tat plays a role in T-cell and neurons apoptosis. Tat induced neurotoxicity and apoptosis probably contribute to neuroAIDS. Circulating Tat also acts as a chemokine-like and/or growth factor-like molecule that binds to specific receptors on the surface of the cells, affecting many cellular pathways. In the vascular system, Tat binds to ITGAV/ITGB3 and ITGA5/ITGB1 integrins dimers at the surface of endothelial cells and competes with bFGF for heparin-binding sites, leading to an excess of soluble bFGF. This chain is Protein Tat, found in Homo sapiens (Human).